Consider the following 540-residue polypeptide: FAD-binding monooxygenase lolF1 (540 aa).

FAD contacts are provided by residues 43 to 46 (VWRE) and 55 to 58 (DSLF). NADP(+) is bound by residues 53–55 (AVD), 182–188 (TGPSGVQ), and 205–206 (QS).

Belongs to the FAD-binding monooxygenase family. FAD is required as a cofactor.

It participates in alkaloid biosynthesis. FAD-binding monooxygenase; part of the gene cluster that mediates the biosynthesis of loline alkaloids, potent insecticidal agents composed of a pyrrolizidine ring system and an uncommon ether bridge linking carbons 2 and 7. Lolines are structurally differentiated by the various modifications of the L-amino group and include norloline, loline, N-methylloline, N-acetylloline, N-acetylnorloline, and N-formylloline. The first committed step is the condensation of O-acetyl-L-homoserine (derived from L-aspartic acid) and L-proline, probably catalyzed by the gamma-type pyridoxal 5'-phosphate(PLP)-dependent enzyme lolC, to give the diamino diacid, NACPP. Ensuing cyclization, decarboxylation, and acetylation steps yield 1-exo-acetamidopyrrolizidine (AcAP). LolO is required for installation of the ether bridge upon the pathway intermediate, 1-exo-acetamidopyrrolizidine (AcAP). In sequential 2-oxoglutarate- and O(2)-consuming steps, lolO removes hydrogens from C2 and C7 of AcAP to form both carbon-oxygen bonds in N-acetylnorloline (NANL), the precursor to all other lolines. The enzymes lolD, lolE, lolF and lolT have also been proposed to be involved in the ether-bridge installation. Further processing of the exocyclic moiety of NANL by fungal N-acetamidase (LolN), methyltransferase (LolM), and cytochrome P450 (LolP) enzymes, with occasional involvement of a plant acetyltransferase, generates the other known lolines. LolN transforms NANL to norlonine which is monomethylated and dimethylated to respectively lonine and N-methyllonine (NML) by lolM. LolP catalyzes hydroxylation of the methyl group in N-methylloline (NML) and further oxygenation to N-formylloline (NFL). A plant acetyltransferase is responsible for the acetylation of loline to form N-acetylloline (NAL). LolA might interact with aspartate kinase to prevent feedback inhibition of its activity by these end products and thereby promote production of L-homoserine from L-aspartate. The protein is FAD-binding monooxygenase lolF1 of Epichloe uncinata (Endophyte fungus).